We begin with the raw amino-acid sequence, 174 residues long: Nicotinamide-nucleotide adenylyltransferase (174 aa).

Belongs to the archaeal NMN adenylyltransferase family.

Its subcellular location is the cytoplasm. The catalysed reaction is beta-nicotinamide D-ribonucleotide + ATP + H(+) = diphosphate + NAD(+). The protein operates within cofactor biosynthesis; NAD(+) biosynthesis; NAD(+) from nicotinamide D-ribonucleotide: step 1/1. The sequence is that of Nicotinamide-nucleotide adenylyltransferase from Methanospirillum hungatei JF-1 (strain ATCC 27890 / DSM 864 / NBRC 100397 / JF-1).